The sequence spans 132 residues: Small ribosomal subunit protein uS11 (132 aa).

It belongs to the universal ribosomal protein uS11 family. In terms of assembly, part of the 30S ribosomal subunit. Interacts with proteins S7 and S18. Binds to IF-3.

In terms of biological role, located on the platform of the 30S subunit, it bridges several disparate RNA helices of the 16S rRNA. Forms part of the Shine-Dalgarno cleft in the 70S ribosome. This is Small ribosomal subunit protein uS11 from Clostridium botulinum (strain 657 / Type Ba4).